The sequence spans 270 residues: Phosphonates import ATP-binding protein PhnC 1 (270 aa).

Residues 2–245 form the ABC transporter domain; it reads LVVEGLTCRF…IARELYDLEA (244 aa). Position 34 to 41 (34 to 41) interacts with ATP; sequence GRSGAGKS.

It belongs to the ABC transporter superfamily. Phosphonates importer (TC 3.A.1.9.1) family. The complex is composed of two ATP-binding proteins (PhnC), two transmembrane proteins (PhnE) and a solute-binding protein (PhnD).

It localises to the cell inner membrane. It carries out the reaction phosphonate(out) + ATP + H2O = phosphonate(in) + ADP + phosphate + H(+). Its function is as follows. Part of the ABC transporter complex PhnCDE involved in phosphonates import. Responsible for energy coupling to the transport system. The sequence is that of Phosphonates import ATP-binding protein PhnC 1 from Rhodopseudomonas palustris (strain ATCC BAA-98 / CGA009).